A 108-amino-acid polypeptide reads, in one-letter code: Phosphoribosyl-ATP pyrophosphatase (108 aa).

The protein belongs to the PRA-PH family.

Its subcellular location is the cytoplasm. It carries out the reaction 1-(5-phospho-beta-D-ribosyl)-ATP + H2O = 1-(5-phospho-beta-D-ribosyl)-5'-AMP + diphosphate + H(+). It participates in amino-acid biosynthesis; L-histidine biosynthesis; L-histidine from 5-phospho-alpha-D-ribose 1-diphosphate: step 2/9. This is Phosphoribosyl-ATP pyrophosphatase from Thiobacillus denitrificans (strain ATCC 25259 / T1).